A 458-amino-acid chain; its full sequence is 5-hydroxytryptamine receptor 2C (458 aa).

Residues 1 to 32 (MVNLRNAVHSFLVHLIGLLVWQCDISVSPVAA) form the signal peptide. Residues 33 to 55 (IVTDIFNTSDGGRFKFPDGVQNW) are Extracellular-facing. The chain crosses the membrane as a helical span at residues 56–80 (PALSIVVIIIMTIGGNILVIMAVSM). The Cytoplasmic portion of the chain corresponds to 81–86 (EKKLHN). Residues 87-111 (ATNYFLMSLAIADMLVGLLVMPLSL) traverse the membrane as a helical segment. The Extracellular segment spans residues 112 to 128 (LAILYDYVWPLPRYLCP). A disulfide bond links Cys127 and Cys207. The chain crosses the membrane as a helical span at residues 129-151 (VWISLDVLFSTASIMHLCAISLD). An ergotamine-binding site is contributed by Thr139. The DRY motif; important for ligand-induced conformation changes signature appears at 151 to 153 (DRY). The Cytoplasmic portion of the chain corresponds to 152–167 (RYVAIRNPIEHSRFNS). The helical transmembrane segment at 168 to 189 (RTKAIMKIAIVWAISIGVSVPI) threads the bilayer. Topologically, residues 190-213 (PVIGLRDERKVFVNNTTCVLNDPN) are extracellular. Leu209 contributes to the ergotamine binding site. Residues 214–236 (FVLIGSFVAFFIPLTIMVITYCL) form a helical membrane-spanning segment. Topologically, residues 237 to 311 (TIYVLRRQAL…AINNERKASK (75 aa)) are cytoplasmic. A disordered region spans residues 274-301 (EENSANPNQDQNARRRKKKERRPRGTMQ). A compositionally biased stretch (basic residues) spans 287-297 (RRRKKKERRPR). A helical membrane pass occupies residues 312–336 (VLGIVFFVFLIMWCPFFITNILSVL). A disulfide bridge links Cys337 with Cys341. Residues 337 to 347 (CEKSCNQKLME) are Extracellular-facing. Residues 348 to 370 (KLLNVFVWIGYVCSGINPLVYTL) form a helical membrane-spanning segment. The NPxxY motif; important for ligand-induced conformation changes and signaling motif lies at 364–368 (NPLVY). Over 371-458 (FNKIYRRAFS…SVVSERISSV (88 aa)) the chain is Cytoplasmic. The PDZ-binding motif lies at 456 to 458 (SSV).

It belongs to the G-protein coupled receptor 1 family. As to quaternary structure, interacts with MPDZ. Interacts with ARRB2. Interacts with MPP3; this interaction stabilizes the receptor at the plasma membrane and prevents the desensitization of the HTR2C receptor-mediated calcium response.

The protein resides in the cell membrane. Its function is as follows. G-protein coupled receptor for 5-hydroxytryptamine (serotonin). Also functions as a receptor for various drugs and psychoactive substances, including ergot alkaloid derivatives, 1-2,5,-dimethoxy-4-iodophenyl-2-aminopropane (DOI) and lysergic acid diethylamide (LSD). Ligand binding causes a conformation change that triggers signaling via guanine nucleotide-binding proteins (G proteins) and modulates the activity of downstream effectors. HTR2C is coupled to G(q)/G(11) G alpha proteins and activates phospholipase C-beta, releasing diacylglycerol (DAG) and inositol 1,4,5-trisphosphate (IP3) second messengers that modulate the activity of phosphatidylinositol 3-kinase and promote the release of Ca(2+) ions from intracellular stores, respectively. Beta-arrestin family members inhibit signaling via G proteins and mediate activation of alternative signaling pathways. Regulates neuronal activity via the activation of short transient receptor potential calcium channels in the brain, and thereby modulates the activation of pro-opiomelanocortin neurons and the release of CRH that then regulates the release of corticosterone. Plays a role in the regulation of appetite and eating behavior, responses to anxiogenic stimuli and stress. Plays a role in insulin sensitivity and glucose homeostasis. The protein is 5-hydroxytryptamine receptor 2C of Pan troglodytes (Chimpanzee).